Reading from the N-terminus, the 220-residue chain is 1-Cys peroxiredoxin B (220 aa).

The 162-residue stretch at 4-165 (LTLGDVVPDL…VLRATDALLT (162 aa)) folds into the Thioredoxin domain. C46 serves as the catalytic Cysteine sulfenic acid (-SOH) intermediate. The Bipartite nuclear localization signal signature appears at 195-218 (KARFPAGFETAQLPSNKCYLRFTQ).

The protein belongs to the peroxiredoxin family. Prx6 subfamily.

The protein localises to the nucleus. Its subcellular location is the cytoplasm. It catalyses the reaction a hydroperoxide + [thioredoxin]-dithiol = an alcohol + [thioredoxin]-disulfide + H2O. In terms of biological role, thiol-specific peroxidase that catalyzes the reduction of hydrogen peroxide and organic hydroperoxides to water and alcohols, respectively. Seems to contribute to the inhibition of germination during stress. In Oryza sativa subsp. indica (Rice), this protein is 1-Cys peroxiredoxin B.